Consider the following 179-residue polypeptide: Large ribosomal subunit protein uL5 (179 aa).

Belongs to the universal ribosomal protein uL5 family. As to quaternary structure, part of the 50S ribosomal subunit; part of the 5S rRNA/L5/L18/L25 subcomplex. Contacts the 5S rRNA and the P site tRNA. Forms a bridge to the 30S subunit in the 70S ribosome.

In terms of biological role, this is one of the proteins that bind and probably mediate the attachment of the 5S RNA into the large ribosomal subunit, where it forms part of the central protuberance. In the 70S ribosome it contacts protein S13 of the 30S subunit (bridge B1b), connecting the 2 subunits; this bridge is implicated in subunit movement. Contacts the P site tRNA; the 5S rRNA and some of its associated proteins might help stabilize positioning of ribosome-bound tRNAs. In Desulfotalea psychrophila (strain LSv54 / DSM 12343), this protein is Large ribosomal subunit protein uL5.